We begin with the raw amino-acid sequence, 145 residues long: Large-conductance mechanosensitive channel (145 aa).

Transmembrane regions (helical) follow at residues 14-34 (VMDL…VKSL), 38-58 (LIMP…YFLP), and 81-101 (GSFL…FLMV).

It belongs to the MscL family. In terms of assembly, homopentamer.

The protein localises to the cell inner membrane. Its function is as follows. Channel that opens in response to stretch forces in the membrane lipid bilayer. May participate in the regulation of osmotic pressure changes within the cell. The protein is Large-conductance mechanosensitive channel of Rhizobium etli (strain CIAT 652).